Here is an 874-residue protein sequence, read N- to C-terminus: Leucine--tRNA ligase (874 aa).

Positions Pro-43–His-53 match the 'HIGH' region motif. A 'KMSKS' region motif is present at residues Lys-630–Ser-634. An ATP-binding site is contributed by Lys-633.

Belongs to the class-I aminoacyl-tRNA synthetase family.

It localises to the cytoplasm. The catalysed reaction is tRNA(Leu) + L-leucine + ATP = L-leucyl-tRNA(Leu) + AMP + diphosphate. This Bradyrhizobium sp. (strain BTAi1 / ATCC BAA-1182) protein is Leucine--tRNA ligase.